The primary structure comprises 290 residues: Ribosomal RNA small subunit methyltransferase A (290 aa).

6 residues coordinate S-adenosyl-L-methionine: N27, L29, G54, E75, D100, and N125.

Belongs to the class I-like SAM-binding methyltransferase superfamily. rRNA adenine N(6)-methyltransferase family. RsmA subfamily.

It localises to the cytoplasm. It carries out the reaction adenosine(1518)/adenosine(1519) in 16S rRNA + 4 S-adenosyl-L-methionine = N(6)-dimethyladenosine(1518)/N(6)-dimethyladenosine(1519) in 16S rRNA + 4 S-adenosyl-L-homocysteine + 4 H(+). Specifically dimethylates two adjacent adenosines (A1518 and A1519) in the loop of a conserved hairpin near the 3'-end of 16S rRNA in the 30S particle. May play a critical role in biogenesis of 30S subunits. This chain is Ribosomal RNA small subunit methyltransferase A, found in Streptococcus pneumoniae (strain P1031).